The sequence spans 148 residues: Hemoglobin subunit beta-2 (148 aa).

A Globin domain is found at 3 to 148 (EWTDAERTAI…VVSALCRQYH (146 aa)). Residues H64 and H93 each contribute to the heme b site.

In terms of assembly, heterotetramer of two alpha chains and two beta chains. As to expression, red blood cells.

In terms of biological role, involved in oxygen transport from gills to the various peripheral tissues. In Danio rerio (Zebrafish), this protein is Hemoglobin subunit beta-2 (ba2).